The primary structure comprises 361 residues: Glutamate 5-kinase (361 aa).

Residue lysine 14 participates in ATP binding. Substrate contacts are provided by serine 54, aspartate 141, and asparagine 153. One can recognise a PUA domain in the interval 277-355 (KGAVIINQGA…KGLKPVIHYD (79 aa)).

The protein belongs to the glutamate 5-kinase family.

It is found in the cytoplasm. It carries out the reaction L-glutamate + ATP = L-glutamyl 5-phosphate + ADP. It functions in the pathway amino-acid biosynthesis; L-proline biosynthesis; L-glutamate 5-semialdehyde from L-glutamate: step 1/2. Catalyzes the transfer of a phosphate group to glutamate to form L-glutamate 5-phosphate. The chain is Glutamate 5-kinase from Chlorobaculum tepidum (strain ATCC 49652 / DSM 12025 / NBRC 103806 / TLS) (Chlorobium tepidum).